We begin with the raw amino-acid sequence, 294 residues long: MPELPTDRLTAVIPPEETLLGYLLRLSRPRFWLYLGGPVIVGVSYAADGPGELFSPLAIALFLYFTIPGNVFLYGVNDIFDADIDEHNPKKDDGREVSYRGDSAVTAIVVASGALALLFALVLPTLGIVALLAWMALSVEYSAPPLRFKTTPFLDSISNGLYILPGVIGYAAIEGVAPPATAVVGAWLWAMGMHTFSAIPDIEPDREAGIQTTATFLGESNTYYYCVMCWLMAAFVFNFTHWVFGVLLLVYPGLVFGILGVGVDIDEAYWWYPAINTVVGMVFTLIALWVMLYG.

Helical transmembrane passes span 31–51, 53–73, 115–135, 160–180, 182–202, 222–242, 243–263, and 274–294; these read FWLYLGGPVIVGVSYAADGPG, LFSPLAIALFLYFTIPGNVFL, LALLFALVLPTLGIVALLAWM, GLYILPGVIGYAAIEGVAPPA, AVVGAWLWAMGMHTFSAIPDI, TYYYCVMCWLMAAFVFNFTHW, VFGVLLLVYPGLVFGILGVGV, and AINTVVGMVFTLIALWVMLYG.

Belongs to the UbiA prenyltransferase family.

The protein localises to the cell membrane. The catalysed reaction is all-trans-lycopene + dimethylallyl diphosphate + H2O = dihydroisopentenyldehydrorhodopin + diphosphate. It carries out the reaction isopentenyldehydrorhodopin + dimethylallyl diphosphate + H2O = dihydrobisanhydrobacterioruberin + diphosphate. Its pathway is carotenoid biosynthesis. In terms of biological role, involved in the biosynthesis of the acyclic C50 carotenoid bacterioruberin (BR). Acts as a bifunctional elongase/hydratase that catalyzes the elongation of lycopene by attaching a C(5) isoprene unit at C-2, as well as the hydroxylation of the previous end of the molecule. The enzyme acts at both ends of the substrate, and catalyzes the conversion of lycopene to the C(45) intermediate dihydroisopentenyldehydrorhodopin (DH-IDR) and the conversion of isopentenyldehydrorhodopin (IDR) to the C(50) carotenoid dihydrobisanhydrobacterioruberin (DH-BABR). Can also catalyze the conversion of lycopene to tetrahydrobisanhydrobacterioruberin (TH-BABR). The sequence is that of Lycopene elongase/hydratase from Haloarcula japonica (strain ATCC 49778 / DSM 6131 / JCM 7785 / NBRC 101032 / NCIMB 13157 / TR-1).